We begin with the raw amino-acid sequence, 623 residues long: Zinc finger protein 143 (623 aa).

7 consecutive C2H2-type zinc fingers follow at residues 230–254, 260–284, 290–314, 320–344, 350–374, 380–404, and 410–433; these read FRCEHEGCGKLYTTAHHLKVHERSH, YICDHLGCGKKFATGYGLKSHVRTH, YRCQELNCLKSFKTSGDLQKHTRTH, FKCPFEGCGRSFTTSNIRKVHIRTH, YYCAEPNCGRAFASATNYKNHMRIH, YVCTVPGCDKRFTEYSSLYKHHVVH, and YNCNHCGKTYKQISTLAMHKRTAH.

This sequence belongs to the GLI C2H2-type zinc-finger protein family.

The protein localises to the nucleus. Transcriptional activator. Activates the gene for selenocysteine tRNA (tRNAsec). Binds to the activator element (AE) motif of the selenocysteine tRNA gene promoter. The chain is Zinc finger protein 143 (znf143) from Danio rerio (Zebrafish).